We begin with the raw amino-acid sequence, 515 residues long: Glucose-6-phosphate 1-dehydrogenase (515 aa).

Residue Ala2 is modified to N-acetylalanine. Residue Ser8 is modified to Phosphoserine. Thr10 bears the Phosphothreonine mark. NADP(+) contacts are provided by residues 38–45 and Arg72; that span reads GASGDLAK. An N6-acetyllysine modification is found at Lys89. NADP(+) is bound by residues Tyr147 and Lys171. Residues Lys171, 201–205, Glu239, and Asp258 contribute to the D-glucose 6-phosphate site; that span reads HYLGK. N6-(2-hydroxyisobutyryl)lysine; alternate is present on Lys171. Lys171 is modified (N6-acetyllysine; alternate). The Proton acceptor role is filled by His263. Residue Arg357 participates in NADP(+) binding. D-glucose 6-phosphate is bound by residues Lys360 and Arg365. The NADP(+) site is built by Lys366, Arg370, and Arg393. Gln395 contributes to the D-glucose 6-phosphate binding site. Residues 401 to 403 and 421 to 423 contribute to the NADP(+) site; these read YTK and DLT. The residue at position 403 (Lys403) is an N6-acetyllysine. Residue Lys432 is modified to N6-acetyllysine. Arg487 is a binding site for NADP(+). At Lys497 the chain carries N6-acetyllysine. NADP(+) is bound by residues Tyr503 and Trp509. Tyr503 bears the Phosphotyrosine mark.

It belongs to the glucose-6-phosphate dehydrogenase family. Homotetramer; dimer of dimers. Interacts with SIRT2; the interaction is enhanced by H(2)O(2) treatment. Forms a ternary complex with ALDOB and TP53; this interaction is direct. ALDOB stabilizes the complex inhibiting G6PD activity and keeping oxidative pentose phosphate metabolism in check. In terms of processing, acetylated by ELP3 at Lys-403; acetylation inhibits its homodimerization and enzyme activity. Deacetylated by SIRT2 at Lys-403; deacetylation stimulates its enzyme activity.

The protein localises to the cytoplasm. Its subcellular location is the cytosol. The protein resides in the membrane. The catalysed reaction is D-glucose 6-phosphate + NADP(+) = 6-phospho-D-glucono-1,5-lactone + NADPH + H(+). The protein operates within carbohydrate degradation; pentose phosphate pathway; D-ribulose 5-phosphate from D-glucose 6-phosphate (oxidative stage): step 1/3. Cytosolic glucose-6-phosphate dehydrogenase that catalyzes the first and rate-limiting step of the oxidative branch within the pentose phosphate pathway/shunt, an alternative route to glycolysis for the dissimilation of carbohydrates and a major source of reducing power and metabolic intermediates for fatty acid and nucleic acid biosynthetic processes. The chain is Glucose-6-phosphate 1-dehydrogenase (G6pdx) from Rattus norvegicus (Rat).